Consider the following 67-residue polypeptide: Large ribosomal subunit protein bL35 (67 aa).

The protein belongs to the bacterial ribosomal protein bL35 family.

The chain is Large ribosomal subunit protein bL35 from Bartonella henselae (strain ATCC 49882 / DSM 28221 / CCUG 30454 / Houston 1) (Rochalimaea henselae).